We begin with the raw amino-acid sequence, 497 residues long: Zinc metalloproteinase nas-28 (497 aa).

A signal peptide spans 1 to 14 (MFFPVVFFIPFVLG). A propeptide spanning residues 15 to 120 (APTQKALEKI…IENGNYRSKR (106 aa)) is cleaved from the precursor. N-linked (GlcNAc...) asparagine glycosylation is present at asparagine 76. One can recognise a Peptidase M12A domain in the interval 121–319 (QAIVDTTNFW…IGVNKLYNCT (199 aa)). Cystine bridges form between cysteine 164–cysteine 318, cysteine 185–cysteine 206, cysteine 328–cysteine 339, cysteine 331–cysteine 342, cysteine 344–cysteine 353, cysteine 364–cysteine 398, and cysteine 427–cysteine 447. Histidine 214 contacts Zn(2+). Glutamate 215 is an active-site residue. Zn(2+) is bound by residues histidine 218 and histidine 224. N-linked (GlcNAc...) asparagine glycosylation is present at asparagine 317. One can recognise an EGF-like domain in the interval 324–354 (IQMKCSNCGITDSRNCNQCKCPRYFTGASCD). The CUB domain occupies 364 to 483 (CNGAVLQATS…LTFSIQYRAV (120 aa)). A glycan (N-linked (GlcNAc...) asparagine) is linked at asparagine 394.

Zn(2+) serves as cofactor.

Its subcellular location is the secreted. Metalloprotease. This chain is Zinc metalloproteinase nas-28 (nas-28), found in Caenorhabditis elegans.